The following is a 395-amino-acid chain: Putative pyridoxal phosphate-dependent acyltransferase (395 aa).

110–111 (GF) provides a ligand contact to pyridoxal 5'-phosphate. Histidine 135 serves as a coordination point for substrate. Pyridoxal 5'-phosphate-binding positions include serine 185, 210–213 (DDAH), and 240–243 (TLSK). Lysine 243 carries the N6-(pyridoxal phosphate)lysine modification. Residue threonine 357 participates in substrate binding.

Belongs to the class-II pyridoxal-phosphate-dependent aminotransferase family. As to quaternary structure, homodimer. Pyridoxal 5'-phosphate is required as a cofactor.

The chain is Putative pyridoxal phosphate-dependent acyltransferase from Staphylococcus aureus (strain Mu50 / ATCC 700699).